Here is a 198-residue protein sequence, read N- to C-terminus: Glycerol-3-phosphate acyltransferase (198 aa).

A run of 5 helical transmembrane segments spans residues 2 to 22 (IIDL…FGVL), 53 to 73 (LGFI…VIAT), 79 to 99 (PFMY…SCFL), 113 to 133 (VLIP…TFFI), and 152 to 172 (IILF…IMAL).

The protein belongs to the PlsY family. As to quaternary structure, probably interacts with PlsX.

Its subcellular location is the cell membrane. It catalyses the reaction an acyl phosphate + sn-glycerol 3-phosphate = a 1-acyl-sn-glycero-3-phosphate + phosphate. Its pathway is lipid metabolism; phospholipid metabolism. In terms of biological role, catalyzes the transfer of an acyl group from acyl-phosphate (acyl-PO(4)) to glycerol-3-phosphate (G3P) to form lysophosphatidic acid (LPA). This enzyme utilizes acyl-phosphate as fatty acyl donor, but not acyl-CoA or acyl-ACP. This is Glycerol-3-phosphate acyltransferase from Lawsonia intracellularis (strain PHE/MN1-00).